We begin with the raw amino-acid sequence, 389 residues long: Lipid-A-disaccharide synthase (389 aa).

The protein belongs to the LpxB family.

It catalyses the reaction a lipid X + a UDP-2-N,3-O-bis[(3R)-3-hydroxyacyl]-alpha-D-glucosamine = a lipid A disaccharide + UDP + H(+). It functions in the pathway bacterial outer membrane biogenesis; LPS lipid A biosynthesis. Its function is as follows. Condensation of UDP-2,3-diacylglucosamine and 2,3-diacylglucosamine-1-phosphate to form lipid A disaccharide, a precursor of lipid A, a phosphorylated glycolipid that anchors the lipopolysaccharide to the outer membrane of the cell. This chain is Lipid-A-disaccharide synthase, found in Burkholderia orbicola (strain MC0-3).